The primary structure comprises 462 residues: uncharacterized protein (462 aa).

Belongs to the IIV-6 329R family.

This is an uncharacterized protein from Aedes vexans (Inland floodwater mosquito).